Consider the following 438-residue polypeptide: GTPase Der (438 aa).

EngA-type G domains are found at residues 4–168 (PVVA…DDNS) and 177–352 (TKVC…NNYS). Residues 10-17 (GRANVGKS), 57-61 (DTGGL), 120-123 (NKID), 183-190 (GKPNVGKS), 230-234 (DTAGL), and 295-298 (NKWD) contribute to the GTP site. Residues 353 to 437 (MRISTGVLND…PLQFEFKTRG (85 aa)) form the KH-like domain.

It belongs to the TRAFAC class TrmE-Era-EngA-EngB-Septin-like GTPase superfamily. EngA (Der) GTPase family. As to quaternary structure, associates with the 50S ribosomal subunit.

Functionally, GTPase that plays an essential role in the late steps of ribosome biogenesis. This is GTPase Der from Finegoldia magna (strain ATCC 29328 / DSM 20472 / WAL 2508) (Peptostreptococcus magnus).